Consider the following 115-residue polypeptide: Large ribosomal subunit protein bL20 (115 aa).

This sequence belongs to the bacterial ribosomal protein bL20 family.

Its function is as follows. Binds directly to 23S ribosomal RNA and is necessary for the in vitro assembly process of the 50S ribosomal subunit. It is not involved in the protein synthesizing functions of that subunit. In Borrelia garinii subsp. bavariensis (strain ATCC BAA-2496 / DSM 23469 / PBi) (Borreliella bavariensis), this protein is Large ribosomal subunit protein bL20.